We begin with the raw amino-acid sequence, 133 residues long: S-protein homolog 21 (133 aa).

Residues 1–21 (MKNLSIFLFVVGLCMISDVYG) form the signal peptide.

It belongs to the plant self-incompatibility (S1) protein family.

The protein localises to the secreted. The sequence is that of S-protein homolog 21 from Arabidopsis thaliana (Mouse-ear cress).